The following is a 415-amino-acid chain: Serine hydroxymethyltransferase 1 (415 aa).

(6S)-5,6,7,8-tetrahydrofolate is bound by residues Leu-122 and 126-128; that span reads GHL. Lys-230 carries the post-translational modification N6-(pyridoxal phosphate)lysine.

The protein belongs to the SHMT family. Homodimer. Pyridoxal 5'-phosphate is required as a cofactor.

It is found in the cytoplasm. The catalysed reaction is (6R)-5,10-methylene-5,6,7,8-tetrahydrofolate + glycine + H2O = (6S)-5,6,7,8-tetrahydrofolate + L-serine. It functions in the pathway one-carbon metabolism; tetrahydrofolate interconversion. It participates in amino-acid biosynthesis; glycine biosynthesis; glycine from L-serine: step 1/1. In terms of biological role, catalyzes the reversible interconversion of serine and glycine with tetrahydrofolate (THF) serving as the one-carbon carrier. This reaction serves as the major source of one-carbon groups required for the biosynthesis of purines, thymidylate, methionine, and other important biomolecules. Also exhibits THF-independent aldolase activity toward beta-hydroxyamino acids, producing glycine and aldehydes, via a retro-aldol mechanism. In Ralstonia nicotianae (strain ATCC BAA-1114 / GMI1000) (Ralstonia solanacearum), this protein is Serine hydroxymethyltransferase 1.